The primary structure comprises 509 residues: Lysophospholipid acyltransferase (509 aa).

Residues 1 to 14 (MAYLIDIPFEYFSS) lie on the Lumenal side of the membrane. A helical membrane pass occupies residues 15–35 (FLGVHPDQLKLLFCFLSAYPF). The Cytoplasmic segment spans residues 36–55 (AGILKRLPSAPWIRNLFSIS). The chain crosses the membrane as a helical span at residues 56–76 (IGLFYLIGVHHLYDGVLVLLF). The Lumenal portion of the chain corresponds to 77-94 (DALFTYFVAAFYRSSRMP). Residues 95–115 (WIIFIVILGHTFSSHVIRYIY) form a helical membrane-spanning segment. Residues 116 to 223 (PSENTDITAS…LEPALGRCWR (108 aa)) lie on the Cytoplasmic side of the membrane. A helical membrane pass occupies residues 224-244 (GLLWLILFITGSSIYPLKFLL). Over 245–246 (TP) the chain is Lumenal. A helical transmembrane segment spans residues 247 to 267 (KFASSPILLKYGYVCITAFVA). At 268–410 (RMKYYGAWEL…TPGPFKRVYD (143 aa)) the chain is on the cytoplasmic side. The active site involves histidine 363. Residues 411-431 (VIGMVATNLSLSYLIISFLLL) form a helical membrane-spanning segment. Over 432 to 441 (NLKESIHVWK) the chain is Lumenal. A helical transmembrane segment spans residues 442–462 (ELYFIVHIYILIALAVFNSPI). Residues 463 to 509 (RSKLDNKIRSRVNSYKLKSYEQSMKSTSDTDMLNMSVPKREDFENDE) lie on the Cytoplasmic side of the membrane. Residues 488–509 (STSDTDMLNMSVPKREDFENDE) are disordered. Serine 490 is modified (phosphoserine). The span at 500–509 (PKREDFENDE) shows a compositional bias: basic and acidic residues.

Belongs to the membrane-bound acyltransferase family.

It localises to the endoplasmic reticulum membrane. The protein localises to the microsome membrane. The enzyme catalyses a 1-acyl-sn-glycero-3-phosphate + an acyl-CoA = a 1,2-diacyl-sn-glycero-3-phosphate + CoA. The catalysed reaction is a 1-acyl-sn-glycero-3-phosphocholine + an acyl-CoA = a 1,2-diacyl-sn-glycero-3-phosphocholine + CoA. It catalyses the reaction a 1-acyl-sn-glycero-3-phosphoethanolamine + an acyl-CoA = a 1,2-diacyl-sn-glycero-3-phosphoethanolamine + CoA. Its function is as follows. Membrane-bound O-acyltransferase that mediates the incorporation of unsaturated acyl chains into the sn-2 position of phospholipids. This chain is Lysophospholipid acyltransferase (ale1), found in Schizosaccharomyces pombe (strain 972 / ATCC 24843) (Fission yeast).